The primary structure comprises 412 residues: DNA utilization protein HofQ (412 aa).

The signal sequence occupies residues 1 to 18 (MKQWIAALLLMLIPGVQA).

This sequence belongs to the bacterial secretin family. PilQ subfamily.

Its subcellular location is the cell outer membrane. Functionally, required for the use of extracellular DNA as a nutrient. Could be the porin responsible for transport of DNA across the outer membrane. This Escherichia coli (strain K12) protein is DNA utilization protein HofQ (hofQ).